Consider the following 201-residue polypeptide: Recombination protein RecR (201 aa).

A C4-type zinc finger spans residues 57–72; sequence CADCRTFTEQEHCTIC. One can recognise a Toprim domain in the interval 81-176; sequence GQICVVESPA…LASRIAHGVP (96 aa).

Belongs to the RecR family.

Functionally, may play a role in DNA repair. It seems to be involved in an RecBC-independent recombinational process of DNA repair. It may act with RecF and RecO. This chain is Recombination protein RecR, found in Yersinia enterocolitica serotype O:8 / biotype 1B (strain NCTC 13174 / 8081).